We begin with the raw amino-acid sequence, 749 residues long: Subtilisin-like protease SBT4.14 (749 aa).

An N-terminal signal peptide occupies residues 1–28 (MIRSKCSCHHHLLVLVMVVLWISPRYAS). The propeptide at 29–115 (AEDEHAKDFY…VSRNQYRKLH (87 aa)) is activation peptide. The Inhibitor I9 domain occupies 38-115 (YIIYLGDRPD…VSRNQYRKLH (78 aa)). Residues 119 to 595 (SWDFVGLPLT…GGQINPRRAA (477 aa)) enclose the Peptidase S8 domain. Asp145 functions as the Charge relay system in the catalytic mechanism. Asn176 is a glycosylation site (N-linked (GlcNAc...) asparagine). His210 (charge relay system) is an active-site residue. Asn225, Asn233, Asn446, and Asn458 each carry an N-linked (GlcNAc...) asparagine glycan. The active-site Charge relay system is the Ser536. N-linked (GlcNAc...) asparagine glycosylation is present at Asn618.

This sequence belongs to the peptidase S8 family. In terms of processing, the C-terminal propeptide is autocleaved. Expressed only in roots, particularly in xylem.

The chain is Subtilisin-like protease SBT4.14 from Arabidopsis thaliana (Mouse-ear cress).